The sequence spans 897 residues: DNA polymerase I (897 aa).

In terms of domain architecture, 5'-3' exonuclease spans 1-317 (MEQPVIKEGT…ILDNTPALDN (317 aa)). A 3'-5' exonuclease domain is found at 318–494 (APKKSRMIVL…RLCEYFEKGG (177 aa)). Positions 498-896 (DLLTLARDIE…FIAKRWNELK (399 aa)) are polymerase.

The protein belongs to the DNA polymerase type-A family. In terms of assembly, single-chain monomer with multiple functions.

The catalysed reaction is DNA(n) + a 2'-deoxyribonucleoside 5'-triphosphate = DNA(n+1) + diphosphate. In terms of biological role, in addition to polymerase activity, this DNA polymerase exhibits 3'-5' and 5'-3' exonuclease activity. This Helicobacter pylori (strain J99 / ATCC 700824) (Campylobacter pylori J99) protein is DNA polymerase I (polA).